The following is a 340-amino-acid chain: Deubiquitinase SseL (340 aa).

Histidine 223 is an active-site residue. Cysteine 285 acts as the Nucleophile in catalysis.

Belongs to the peptidase C79 family.

It is found in the secreted. Its subcellular location is the host cytoplasm. Its function is as follows. Effector proteins function to alter host cell physiology and promote bacterial survival in host tissues. This protease targets the host cell ubiquitin pathway by acting as a deubiquitinase in infected host cells. This Salmonella choleraesuis (strain SC-B67) protein is Deubiquitinase SseL (sseL).